Here is a 2139-residue protein sequence, read N- to C-terminus: U5 small nuclear ribonucleoprotein 200 kDa helicase (2139 aa).

Residues S17 and S26 each carry the phosphoserine modification. Positions 39-80 are disordered; the sequence is EVLSLVGKLEGTRMGDKAQRTKPQMQEERRAKRRKRDEDRHD. K46 is covalently cross-linked (Glycyl lysine isopeptide (Lys-Gly) (interchain with G-Cter in SUMO2)). The span at 48-80 shows a compositional bias: basic and acidic residues; it reads EGTRMGDKAQRTKPQMQEERRAKRRKRDEDRHD. Residues 54 to 84 are a coiled coil; that stretch reads DKAQRTKPQMQEERRAKRRKRDEDRHDINKM. S225 is modified (phosphoserine). Position 389 is a phosphothreonine (T389). The tract at residues 395 to 2132 is interaction with C9orf78 and WBP4; sequence DLDQGGEALA…YKFSVDVKEA (1738 aa). Residues 490–673 form the Helicase ATP-binding 1 domain; that stretch reads RAALETDENL…FLRVDPAKGL (184 aa). 503-510 is an ATP binding site; the sequence is APTGAGKT. The DEAH box motif lies at 615 to 618; the sequence is DEIH. Residues 684–921 form the Helicase C-terminal 1 domain; that stretch reads PLEQTYVGIT…NAKDAVNWLG (238 aa). A Phosphotyrosine modification is found at Y709. K944 is covalently cross-linked (Glycyl lysine isopeptide (Lys-Gly) (interchain with G-Cter in SUMO)). N6-acetyllysine; alternate is present on K971. K971 is covalently cross-linked (Glycyl lysine isopeptide (Lys-Gly) (interchain with G-Cter in SUMO); alternate). The SEC63 1 domain maps to 982-1289; the sequence is TELGRIASHY…SCETQLPVSF (308 aa). Glycyl lysine isopeptide (Lys-Gly) (interchain with G-Cter in SUMO) cross-links involve residues K1071 and K1199. The tract at residues 1285 to 2139 is interaction with TSSC4; that stretch reads LPVSFRHLIL…KEAETDSDSD (855 aa). One can recognise a Helicase ATP-binding 2 domain in the interval 1340 to 1515; that stretch reads NTVYNSDDNV…WLGCSATSTF (176 aa). 1353-1360 is an ATP binding site; the sequence is APTGSGKT. Residue T1431 is modified to Phosphothreonine. The DEAH box motif lies at 1457-1460; it reads DEVH. One can recognise a Helicase C-terminal 2 domain in the interval 1548–1756; that stretch reads PVYHAITKHS…TIENKQDAVD (209 aa). T1768 bears the Phosphothreonine mark. The SEC63 2 domain occupies 1815–2127; it reads PLNLGMIAAY…GCDQEYKFSV (313 aa). A Phosphoserine modification is found at S2005. K2094 is covalently cross-linked (Glycyl lysine isopeptide (Lys-Gly) (interchain with G-Cter in SUMO)). The residue at position 2134 (T2134) is a Phosphothreonine. Phosphoserine occurs at positions 2136 and 2138.

It belongs to the helicase family. SKI2 subfamily. As to quaternary structure, component of a core complex containing at least PRPF8, SNRNP200, EFTUD2 and SNRNP40. Component of the U5 snRNP and U4/U6-U5 tri-snRNP complexes, building blocks of the spliceosome. Component of the U4/U6-U5 tri-snRNP complex composed of the U4, U6 and U5 snRNAs and at least PRPF3, PRPF4, PRPF6, PRPF8, PRPF31, SNRNP200, TXNL4A, SNRNP40, DDX23, CD2BP2, PPIH, SNU13, EFTUD2, SART1 and USP39. Component of precatalytic, catalytic and postcatalytic spliceosomal complexes. Component of the minor spliceosome, which splices U12-type introns. Interacts with C9orf78; the interaction is direct and mutually exclusive with its interaction with WBP4. Interacts with WBP4; the interaction is mutually exclusive with its interaction with C9orf78. Interacts with PRPF8. Interacts with TSSC4; the interaction is direct, excludes recruitment of C9ORF78 and WBP4 to SNRNP200 and negatively regulates its RNA helicase activity.

The protein resides in the nucleus. It carries out the reaction ATP + H2O = ADP + phosphate + H(+). Its function is as follows. Catalyzes the ATP-dependent unwinding of U4/U6 RNA duplices, an essential step in the assembly of a catalytically active spliceosome. Plays a role in pre-mRNA splicing as core component of precatalytic, catalytic and postcatalytic spliceosomal complexes. As a component of the minor spliceosome, involved in the splicing of U12-type introns in pre-mRNAs. Involved in spliceosome assembly, activation and disassembly. Mediates changes in the dynamic network of RNA-RNA interactions in the spliceosome. The sequence is that of U5 small nuclear ribonucleoprotein 200 kDa helicase (Snrnp200) from Rattus norvegicus (Rat).